The chain runs to 158 residues: Large ribosomal subunit protein bL21 (158 aa).

Residues threonine 127 to aspartate 158 form a disordered region. Residues lysine 131 to aspartate 158 show a composition bias toward low complexity.

Belongs to the bacterial ribosomal protein bL21 family. As to quaternary structure, part of the 50S ribosomal subunit. Contacts protein L20.

Functionally, this protein binds to 23S rRNA in the presence of protein L20. This is Large ribosomal subunit protein bL21 from Bartonella henselae (strain ATCC 49882 / DSM 28221 / CCUG 30454 / Houston 1) (Rochalimaea henselae).